Consider the following 70-residue polypeptide: Toxin Isom2 (70 aa).

Residues 2 to 65 (KNGYAVDSSG…ISDTRKKYCD (64 aa)) form the LCN-type CS-alpha/beta domain. Disulfide bonds link Cys-16-Cys-37, Cys-22-Cys-42, Cys-26-Cys-44, and Cys-38-Cys-64.

Expressed by the venom gland.

The protein resides in the secreted. Its function is as follows. Excitatory insect beta-toxins induce a spastic paralysis. They bind voltage-independently at site-4 of sodium channels (Nav) and shift the voltage of activation toward more negative potentials thereby affecting sodium channel activation and promoting spontaneous and repetitive firing. This Isometrus vittatus (Bark scorpion) protein is Toxin Isom2.